The chain runs to 128 residues: Large ribosomal subunit protein uL22 (128 aa).

It belongs to the universal ribosomal protein uL22 family. Part of the 50S ribosomal subunit.

In terms of biological role, this protein binds specifically to 23S rRNA; its binding is stimulated by other ribosomal proteins, e.g. L4, L17, and L20. It is important during the early stages of 50S assembly. It makes multiple contacts with different domains of the 23S rRNA in the assembled 50S subunit and ribosome. The globular domain of the protein is located near the polypeptide exit tunnel on the outside of the subunit, while an extended beta-hairpin is found that lines the wall of the exit tunnel in the center of the 70S ribosome. The protein is Large ribosomal subunit protein uL22 of Prochlorococcus marinus (strain MIT 9515).